Consider the following 810-residue polypeptide: Venom phosphodiesterase 2 (810 aa).

The first 23 residues, Met1–Gly23, serve as a signal peptide directing secretion. The SMB domain occupies Gln33–Ser77. 9 disulfide bridges follow: Cys37–Cys42, Cys37–Cys54, Cys42–Cys72, Cys52–Cys54, Cys52–Cys65, Cys58–Cys64, Cys65–Cys72, Cys83–Cys129, and Cys91–Cys303. Asp106 and Thr144 together coordinate a divalent metal cation. Catalysis depends on Thr144, which acts as the AMP-threonine intermediate. Residues Asn175, Asn218, and Asn229 are each glycosylated (N-linked (GlcNAc...) asparagine). Lys230 provides a ligand contact to AMP. Positions 264, 268, 311, and 312 each coordinate a divalent metal cation. His268 is an AMP binding site. 6 cysteine pairs are disulfide-bonded: Cys319/Cys416, Cys367/Cys752, Cys500/Cys558, Cys513/Cys613, Cys515/Cys598, and Cys721/Cys731. The N-linked (GlcNAc...) asparagine glycan is linked to Asn364. His421 is a binding site for a divalent metal cation. N-linked (GlcNAc...) asparagine glycans are attached at residues Asn471, Asn553, Asn633, and Asn704.

The protein belongs to the nucleotide pyrophosphatase/phosphodiesterase family. Monomer cleaved in two subunits; disulfide-linked. Is synthesized as a single-chain protein and is subsequently cleaved to form a two-subunit protein held together with disulfide bonds. It depends on a divalent metal cation as a cofactor. In terms of tissue distribution, expressed by venom gland.

It localises to the secreted. The catalysed reaction is ADP + H2O = AMP + phosphate + H(+). Hydrolyzes ADP with high activity. Shows weak or no activity on 5'-AMP, 5'-GMP, 3'-AMP, ATP, cAMP, and cGMP. Is devoid of monophosphatase and proteinase activities. Dose-dependently inhibits platelet aggregation induced by ADP (IC(50)=0.99 uM) and collagen (IC(50)=1.4 uM). The chain is Venom phosphodiesterase 2 from Crotalus adamanteus (Eastern diamondback rattlesnake).